The following is a 139-amino-acid chain: 6,7-dimethyl-8-ribityllumazine synthase (139 aa).

Residues Phe11, 42-44, and 66-68 contribute to the 5-amino-6-(D-ribitylamino)uracil site; these read ALE and VVI. 71–72 contacts (2S)-2-hydroxy-3-oxobutyl phosphate; that stretch reads ET. Catalysis depends on His74, which acts as the Proton donor. Residue Asn98 participates in 5-amino-6-(D-ribitylamino)uracil binding. Arg112 is a binding site for (2S)-2-hydroxy-3-oxobutyl phosphate.

Belongs to the DMRL synthase family.

The catalysed reaction is (2S)-2-hydroxy-3-oxobutyl phosphate + 5-amino-6-(D-ribitylamino)uracil = 6,7-dimethyl-8-(1-D-ribityl)lumazine + phosphate + 2 H2O + H(+). It functions in the pathway cofactor biosynthesis; riboflavin biosynthesis; riboflavin from 2-hydroxy-3-oxobutyl phosphate and 5-amino-6-(D-ribitylamino)uracil: step 1/2. Functionally, catalyzes the formation of 6,7-dimethyl-8-ribityllumazine by condensation of 5-amino-6-(D-ribitylamino)uracil with 3,4-dihydroxy-2-butanone 4-phosphate. This is the penultimate step in the biosynthesis of riboflavin. The chain is 6,7-dimethyl-8-ribityllumazine synthase from Zymomonas mobilis subsp. mobilis (strain ATCC 31821 / ZM4 / CP4).